We begin with the raw amino-acid sequence, 1277 residues long: Protein FAM83H (1277 aa).

A compositionally biased stretch (polar residues) spans 1 to 12 (MARRSQSSSQGE). Disordered regions lie at residues 1–20 (MARR…PNYL), 67–98 (SLQR…SGTY), 717–756 (FGST…TNPL), 772–805 (SKLE…TGRT), 971–1018 (EQTS…NSAF), 1070–1130 (KAEE…SRLS), 1158–1225 (QKNR…RDIL), and 1247–1266 (KKDE…AGKI). The segment covering 724–750 (SVEKAKENPPAEKEKEEGLLSRHDSFR) has biased composition (basic and acidic residues). Composition is skewed to polar residues over residues 777–805 (HTST…TGRT), 971–982 (EQTSSTIQTIGN), 993–1015 (SGPT…TRPN), and 1112–1130 (KSLS…SRLS). A compositionally biased stretch (low complexity) spans 1204-1215 (SFLSRSRFSRPS). Over residues 1247–1263 (KKDEQPSHADDNDDKKA) the composition is skewed to basic and acidic residues.

The protein belongs to the FAM83 family.

The protein localises to the cytoplasm. It localises to the cytoskeleton. Functionally, may play a role in keratin cytoskeleton disassembly. The chain is Protein FAM83H from Xenopus tropicalis (Western clawed frog).